Reading from the N-terminus, the 346-residue chain is Transposase for insertion sequence element IS1533 (346 aa).

The protein belongs to the transposase IS1111A/IS1328/IS1533 family.

Functionally, required for the transposition of the insertion element. The chain is Transposase for insertion sequence element IS1533 (tnhA) from Leptospira borgpetersenii.